The sequence spans 138 residues: Putative membrane protein insertion efficiency factor (138 aa).

The interval 71–138 (YDPVPGTPEA…GTPSHTRGEN (68 aa)) is disordered. Basic and acidic residues predominate over residues 81-113 (RQWRELHPETARSKNEPIHDLTDDNPRDHEPAL). Residues 123 to 138 (PGSTHTGTPSHTRGEN) are compositionally biased toward polar residues.

It belongs to the UPF0161 family.

Its subcellular location is the cell membrane. Could be involved in insertion of integral membrane proteins into the membrane. This Cutibacterium acnes (strain DSM 16379 / KPA171202) (Propionibacterium acnes) protein is Putative membrane protein insertion efficiency factor.